The chain runs to 52 residues: uncharacterized protein (52 aa).

This is an uncharacterized protein from Halalkalibacterium halodurans (strain ATCC BAA-125 / DSM 18197 / FERM 7344 / JCM 9153 / C-125) (Bacillus halodurans).